The sequence spans 149 residues: Large ribosomal subunit protein bL9 (149 aa).

Belongs to the bacterial ribosomal protein bL9 family.

Functionally, binds to the 23S rRNA. This Syntrophus aciditrophicus (strain SB) protein is Large ribosomal subunit protein bL9.